The following is a 624-amino-acid chain: Ceramide transfer protein (624 aa).

Positions Met1 to Gly11 are enriched in polar residues. Positions Met1–Val24 are disordered. The 95-residue stretch at Pro23 to Thr117 folds into the PH domain. Residue Ser126 is modified to Phosphoserine. The residue at position 132 (Ser132) is a Phosphoserine; by PKD. At Ser135 the chain carries Phosphoserine. Residues Ile263 to His303 are a coiled coil. A Phosphoserine modification is found at Ser315. Residues Glu321–Glu327 carry the FFAT motif. Position 372 is a phosphotyrosine (Tyr372). Residues Ser373, Ser377, and Ser380 each carry the phosphoserine modification. Residues Asp389–Ala618 enclose the START domain. 4 residues coordinate an N-acylsphing-4-enine: Glu472, Gln493, Asn530, and Tyr579.

In terms of assembly, interacts with VAPA and VAPB. Interaction with VAPB is less efficient than with VAPA. Interacts (via FFAT motif) with the MOSPD2 (via MSP domain). Phosphorylation on Ser-132 decreases the affinity toward phosphatidylinositol 4-phosphate at Golgi membranes and reduces ceramide transfer activity. Inactivated by hyperphosphorylation of serine residues by CSNK1G2/CK1 that triggers dissociation from the Golgi complex, thus down-regulating ER-to-Golgi transport of ceramide and sphingomyelin synthesis.

Its subcellular location is the cytoplasm. It is found in the golgi apparatus. The protein localises to the endoplasmic reticulum. The enzyme catalyses N-hexadecanoylsphing-4-enine(in) = N-hexadecanoylsphing-4-enine(out). In terms of biological role, shelters ceramides and diacylglycerol lipids inside its START domain and mediates the intracellular trafficking of ceramides and diacylglycerol lipids in a non-vesicular manner. The protein is Ceramide transfer protein (CERT1) of Pongo abelii (Sumatran orangutan).